A 257-amino-acid polypeptide reads, in one-letter code: Pyridoxine 5'-phosphate synthase (257 aa).

Asparagine 16 contacts 3-amino-2-oxopropyl phosphate. 18–19 (DH) contributes to the 1-deoxy-D-xylulose 5-phosphate binding site. Residue arginine 27 coordinates 3-amino-2-oxopropyl phosphate. Residue histidine 52 is the Proton acceptor of the active site. Residues arginine 54 and histidine 59 each contribute to the 1-deoxy-D-xylulose 5-phosphate site. Glutamate 79 acts as the Proton acceptor in catalysis. Threonine 109 contributes to the 1-deoxy-D-xylulose 5-phosphate binding site. Histidine 200 serves as the catalytic Proton donor. Residues glycine 201 and 222 to 223 (GH) contribute to the 3-amino-2-oxopropyl phosphate site.

Belongs to the PNP synthase family. Homooctamer; tetramer of dimers.

The protein localises to the cytoplasm. The enzyme catalyses 3-amino-2-oxopropyl phosphate + 1-deoxy-D-xylulose 5-phosphate = pyridoxine 5'-phosphate + phosphate + 2 H2O + H(+). The protein operates within cofactor biosynthesis; pyridoxine 5'-phosphate biosynthesis; pyridoxine 5'-phosphate from D-erythrose 4-phosphate: step 5/5. Its function is as follows. Catalyzes the complicated ring closure reaction between the two acyclic compounds 1-deoxy-D-xylulose-5-phosphate (DXP) and 3-amino-2-oxopropyl phosphate (1-amino-acetone-3-phosphate or AAP) to form pyridoxine 5'-phosphate (PNP) and inorganic phosphate. In Burkholderia pseudomallei (strain K96243), this protein is Pyridoxine 5'-phosphate synthase.